The primary structure comprises 58 residues: UPF0391 membrane protein Shewmr4_2671 (58 aa).

2 helical membrane-spanning segments follow: residues 6–26 and 28–48; these read LMFLVVAIIAGLFGFTGIAGA and AGIAKIIFFLFIVLLVISLLV.

It belongs to the UPF0391 family.

Its subcellular location is the cell membrane. The chain is UPF0391 membrane protein Shewmr4_2671 from Shewanella sp. (strain MR-4).